Here is a 357-residue protein sequence, read N- to C-terminus: Protein ATP1B4 (357 aa).

Residues 1–110 (MRRQLRSRRA…FLARTGQSWS (110 aa)) lie on the Nuclear side of the membrane. The disordered stretch occupies residues 15 to 80 (YSYRYRLDDP…EEGQGQPTGN (66 aa)). Positions 52–73 (EEEEEEEEKEEEEEEEKEEEEG) are enriched in acidic residues. A helical; Signal-anchor for type II membrane protein membrane pass occupies residues 111–131 (LILLIYFFFYASLAAVITLCM). Over 132-357 (YTLFLTISPY…RVIFTLNIET (226 aa)) the chain is Perinuclear space.

The protein belongs to the X(+)/potassium ATPases subunit beta family. Associates with a SMAD7-transcriptional complex. Interacts with SNW1 and TOR1AIP1. According to PubMed:17592128, does not associate with known Na,K-ATPase alpha-subunits. As to expression, highly expressed in skeletal muscle and at a lower level in heart.

It localises to the nucleus inner membrane. Its function is as follows. May act as a transcriptional coregulator during muscle development through its interaction with SNW1. Has lost its ancestral function as a Na,K-ATPase beta-subunit. In Homo sapiens (Human), this protein is Protein ATP1B4 (ATP1B4).